The chain runs to 179 residues: Putative 5'(3')-deoxyribonucleotidase (179 aa).

Asp9 functions as the Nucleophile in the catalytic mechanism. Mg(2+) is bound by residues Asp9, Asp11, and Asp135. Asp11 serves as the catalytic Proton donor.

Belongs to the 5'(3')-deoxyribonucleotidase family. Requires Mg(2+) as cofactor.

Its function is as follows. Dephosphorylates the 5' and 2'(3')-phosphates of deoxyribonucleotides. This is Putative 5'(3')-deoxyribonucleotidase from Staphylococcus epidermidis (strain ATCC 35984 / DSM 28319 / BCRC 17069 / CCUG 31568 / BM 3577 / RP62A).